A 381-amino-acid chain; its full sequence is Dual specificity protein phosphatase 6 (381 aa).

A Rhodanese domain is found at 30–148 (GNEQLLLMDC…FQAEFALHCE (119 aa)). A disordered region spans residues 176 to 203 (SSSDIESDLDRDPNSATDSDGSPLSNSQ). Over residues 189–203 (NSATDSDGSPLSNSQ) the composition is skewed to polar residues. A Tyrosine-protein phosphatase domain is found at 206 to 349 (FPVEILPFLY…LLDFERTLGL (144 aa)). C293 acts as the Phosphocysteine intermediate in catalysis.

This sequence belongs to the protein-tyrosine phosphatase family. Non-receptor class dual specificity subfamily. As to quaternary structure, interacts with MAPK1/ERK2. In terms of processing, ubiquitinated by the SCF(FBXO31) complex, leading to its proteasomal degradation. Expressed in lung, heart, brain, and kidney, but not significantly in skeletal muscle or testis.

Its subcellular location is the cytoplasm. The enzyme catalyses O-phospho-L-tyrosyl-[protein] + H2O = L-tyrosyl-[protein] + phosphate. It carries out the reaction O-phospho-L-seryl-[protein] + H2O = L-seryl-[protein] + phosphate. The catalysed reaction is O-phospho-L-threonyl-[protein] + H2O = L-threonyl-[protein] + phosphate. Dual specificity protein phosphatase, which mediates dephosphorylation and inactivation of MAP kinases. Has a specificity for the ERK family. Implicated in muscle and neuronal differentiation. Plays an important role in alleviating chronic postoperative pain. Necessary for the normal dephosphorylation of the long-lasting phosphorylated forms of spinal MAPK1/3 and MAP kinase p38 induced by peripheral surgery, which drives the resolution of acute postoperative allodynia. Also important for dephosphorylation of MAPK1/3 in local wound tissue, which further contributes to resolution of acute pain. This chain is Dual specificity protein phosphatase 6 (Dusp6), found in Rattus norvegicus (Rat).